The sequence spans 581 residues: Arginine--tRNA ligase (581 aa).

A 'HIGH' region motif is present at residues 122–132 (PNVAKPMHVGH).

It belongs to the class-I aminoacyl-tRNA synthetase family. In terms of assembly, monomer.

It is found in the cytoplasm. It catalyses the reaction tRNA(Arg) + L-arginine + ATP = L-arginyl-tRNA(Arg) + AMP + diphosphate. The protein is Arginine--tRNA ligase of Francisella tularensis subsp. tularensis (strain WY96-3418).